Consider the following 134-residue polypeptide: Sec-independent protein translocase protein TatB (134 aa).

A helical membrane pass occupies residues 2–22 (FDGIGFMELLLIGILGLVVLG). Residues 90-134 (AESVNRPYKVEDTSPVAPKASPDESPSVVEAKSSEATSENSSTPK) form a disordered region. Positions 123–134 (SEATSENSSTPK) are enriched in polar residues.

Belongs to the TatB family. As to quaternary structure, the Tat system comprises two distinct complexes: a TatABC complex, containing multiple copies of TatA, TatB and TatC subunits, and a separate TatA complex, containing only TatA subunits. Substrates initially bind to the TatABC complex, which probably triggers association of the separate TatA complex to form the active translocon.

The protein localises to the cell inner membrane. Part of the twin-arginine translocation (Tat) system that transports large folded proteins containing a characteristic twin-arginine motif in their signal peptide across membranes. Together with TatC, TatB is part of a receptor directly interacting with Tat signal peptides. TatB may form an oligomeric binding site that transiently accommodates folded Tat precursor proteins before their translocation. The protein is Sec-independent protein translocase protein TatB of Shewanella frigidimarina (strain NCIMB 400).